Consider the following 118-residue polypeptide: Large ribosomal subunit protein bL20 (118 aa).

It belongs to the bacterial ribosomal protein bL20 family.

Functionally, binds directly to 23S ribosomal RNA and is necessary for the in vitro assembly process of the 50S ribosomal subunit. It is not involved in the protein synthesizing functions of that subunit. This Leptothrix cholodnii (strain ATCC 51168 / LMG 8142 / SP-6) (Leptothrix discophora (strain SP-6)) protein is Large ribosomal subunit protein bL20.